A 480-amino-acid polypeptide reads, in one-letter code: Proline--tRNA ligase (480 aa).

It belongs to the class-II aminoacyl-tRNA synthetase family. ProS type 3 subfamily. In terms of assembly, homodimer.

The protein resides in the cytoplasm. It catalyses the reaction tRNA(Pro) + L-proline + ATP = L-prolyl-tRNA(Pro) + AMP + diphosphate. Catalyzes the attachment of proline to tRNA(Pro) in a two-step reaction: proline is first activated by ATP to form Pro-AMP and then transferred to the acceptor end of tRNA(Pro). The chain is Proline--tRNA ligase from Methanosarcina mazei (strain ATCC BAA-159 / DSM 3647 / Goe1 / Go1 / JCM 11833 / OCM 88) (Methanosarcina frisia).